Reading from the N-terminus, the 163-residue chain is HTH-type transcriptional regulator IscR (163 aa).

Positions 2 to 131 constitute an HTH rrf2-type domain; it reads RLTSKGRYAV…NNITLGELVN (130 aa). The H-T-H motif DNA-binding region spans 28–51; it reads LADISERQGISLSYLEQLFSRLRK. Residues Cys92, Cys98, and Cys104 each coordinate [2Fe-2S] cluster.

It depends on [2Fe-2S] cluster as a cofactor.

Its function is as follows. Regulates the transcription of several operons and genes involved in the biogenesis of Fe-S clusters and Fe-S-containing proteins. This chain is HTH-type transcriptional regulator IscR, found in Enterobacter sp. (strain 638).